The sequence spans 216 residues: 3-isopropylmalate dehydratase small subunit (216 aa).

Belongs to the LeuD family. LeuD type 1 subfamily. Heterodimer of LeuC and LeuD.

It carries out the reaction (2R,3S)-3-isopropylmalate = (2S)-2-isopropylmalate. It functions in the pathway amino-acid biosynthesis; L-leucine biosynthesis; L-leucine from 3-methyl-2-oxobutanoate: step 2/4. Functionally, catalyzes the isomerization between 2-isopropylmalate and 3-isopropylmalate, via the formation of 2-isopropylmaleate. This chain is 3-isopropylmalate dehydratase small subunit, found in Ralstonia nicotianae (strain ATCC BAA-1114 / GMI1000) (Ralstonia solanacearum).